The sequence spans 191 residues: Protein Ves (191 aa).

It belongs to the Ves family.

This Shigella flexneri protein is Protein Ves.